The following is a 316-amino-acid chain: Thymidylate synthase (316 aa).

DUMP-binding positions include Arg23 and 178-179 (RR). The Nucleophile role is filled by Cys198. Residues 218 to 221 (RSAD), Asn229, and 259 to 261 (HLY) contribute to the dUMP site. Asp221 provides a ligand contact to (6R)-5,10-methylene-5,6,7,8-tetrahydrofolate. A (6R)-5,10-methylene-5,6,7,8-tetrahydrofolate-binding site is contributed by Ala315.

It belongs to the thymidylate synthase family. Bacterial-type ThyA subfamily. As to quaternary structure, homodimer.

The protein resides in the cytoplasm. It carries out the reaction dUMP + (6R)-5,10-methylene-5,6,7,8-tetrahydrofolate = 7,8-dihydrofolate + dTMP. It participates in pyrimidine metabolism; dTTP biosynthesis. In terms of biological role, catalyzes the reductive methylation of 2'-deoxyuridine-5'-monophosphate (dUMP) to 2'-deoxythymidine-5'-monophosphate (dTMP) while utilizing 5,10-methylenetetrahydrofolate (mTHF) as the methyl donor and reductant in the reaction, yielding dihydrofolate (DHF) as a by-product. This enzymatic reaction provides an intracellular de novo source of dTMP, an essential precursor for DNA biosynthesis. The polypeptide is Thymidylate synthase (Lacticaseibacillus paracasei (strain ATCC 334 / BCRC 17002 / CCUG 31169 / CIP 107868 / KCTC 3260 / NRRL B-441) (Lactobacillus paracasei)).